The chain runs to 200 residues: Nucleoside triphosphate pyrophosphatase (200 aa).

Residue aspartate 79 is the Proton acceptor of the active site.

Belongs to the Maf family. A divalent metal cation is required as a cofactor.

The protein localises to the cytoplasm. It carries out the reaction a ribonucleoside 5'-triphosphate + H2O = a ribonucleoside 5'-phosphate + diphosphate + H(+). The catalysed reaction is a 2'-deoxyribonucleoside 5'-triphosphate + H2O = a 2'-deoxyribonucleoside 5'-phosphate + diphosphate + H(+). Functionally, nucleoside triphosphate pyrophosphatase. May have a dual role in cell division arrest and in preventing the incorporation of modified nucleotides into cellular nucleic acids. The protein is Nucleoside triphosphate pyrophosphatase of Legionella pneumophila (strain Corby).